Consider the following 200-residue polypeptide: Nucleoplasmin (200 aa).

Position 2 is an N-acetylalanine (Ala-2). Ser-3 bears the Phosphoserine mark. Thr-4 is modified (phosphothreonine). Phosphoserine is present on Ser-6. Thr-8 is subject to Phosphothreonine. Residues Glu-35–Glu-39 form an acidic tract A1 region. Positions Asp-123–Glu-148 are enriched in acidic residues. The tract at residues Asp-123–Lys-200 is disordered. The segment at Glu-128 to Glu-148 is acidic tract A2. Ser-149 is subject to Phosphoserine. The segment covering Ala-153–Lys-170 has biased composition (basic residues). The Bipartite nuclear localization signal motif lies at Lys-155–Lys-170. The tract at residues Glu-174–Glu-176 is acidic tract A3. Ser-177, Ser-178, and Ser-182 each carry phosphoserine. Residues Lys-185–Lys-200 show a composition bias toward basic residues. Arg-192 is modified (omega-N-methylarginine; by PRMT5; alternate). Arg-192 is modified (symmetric dimethylarginine; by PRMT5; alternate).

It belongs to the nucleoplasmin family. In terms of assembly, homopentamer, when bound to H2A-H2B dimers only. Homodecamer of two stacked pentamers, when bound to H2A-H2B dimers and H3-H4 tetramers simultaneously. Interacts with the heterotetramer formed by wdr77 and prmt5. Activated by phosphorylation of multiple serine/threonine residues, along both core and tail domains. The level of phosphorylation gradually increases during egg maturation, reaching an average of 7-10 phosphates per monomer, so that at the time of fertilization the activity of the protein is maximum. In terms of processing, methylated by prmt5, yielding both monomethylated and symmetrically dimethylated Arg-192.

The protein resides in the nucleus. Acts as a chaperone for histones, such as histone H2A-H2B, and thus regulates the assembly of nucleosome cores. Involved in chromatin remodeling, especially during fertilization and early embryonic development. May be involved in sperm chromatin decondensation during fertilization. This is Nucleoplasmin from Xenopus laevis (African clawed frog).